Reading from the N-terminus, the 170-residue chain is MSKIGLFFGTQTGNTEELAQAIQAAFGGSDIVELFDVAEVDIEALRDFDQLIIGCPTWNVGELQSDWEALYDDLDDVDFSGKTIAYFGAGDQVGYADNFQDAMGVLEEKITSLGGKTVGQWPTAGYDHSESKAERDGKFVGLAIDEDNQPELTAERIQAWVAQLKPAFGL.

Residues Ile-4 to Lys-165 form the Flavodoxin-like domain.

This sequence belongs to the flavodoxin family. Requires FMN as cofactor.

Its function is as follows. Low-potential electron donor to a number of redox enzymes. This is Flavodoxin (isiB) from Picosynechococcus sp. (strain ATCC 27264 / PCC 7002 / PR-6) (Agmenellum quadruplicatum).